We begin with the raw amino-acid sequence, 237 residues long: Lectin (237 aa).

Asn-69 is a glycosylation site (N-linked (GlcNAc...) asparagine). Ile-106 is subject to Blocked amino end (Ile). Positions 115 and 117 each coordinate Mn(2+). Residues Asp-117, Tyr-120, Asn-122, and Asp-127 each coordinate Ca(2+). Asp-127 and His-132 together coordinate Mn(2+).

The protein belongs to the leguminous lectin family. In terms of assembly, tetramer of two alpha and two beta chains. The N-terminus of alpha chain is blocked. The alpha and beta chains are produced by proteolytic processing, with probably the loss of intervening amino acid(s).

In terms of biological role, D-mannose/D-glucose-binding lectin. Requires Ca(2+) and Mn(2+) ions for full activity. The sequence is that of Lectin from Lablab purpureus (Hyacinth bean).